Here is a 326-residue protein sequence, read N- to C-terminus: Putative ABC transporter ATP-binding protein MPN_334 (326 aa).

One can recognise an ABC transporter domain in the interval 7-239 (VEVKHLEKEF…NFGYRLKVNN (233 aa)). 42-49 (GQNGAGKT) contacts ATP.

This sequence belongs to the ABC transporter superfamily.

This Mycoplasma pneumoniae (strain ATCC 29342 / M129 / Subtype 1) (Mycoplasmoides pneumoniae) protein is Putative ABC transporter ATP-binding protein MPN_334.